The primary structure comprises 117 residues: Ig heavy chain V region 3 (117 aa).

An N-terminal signal peptide occupies residues 1–19 (MGWSCIILFLVATATGVHS). The interval 20–49 (QVQLQQPGAELVRPGSSVKLSCKASGYTFT) is framework-1. Cysteine 41 and cysteine 115 form a disulfide bridge. Residues 50–54 (SYWMD) are complementarity-determining-1. The tract at residues 55–68 (WVKQRPGQGLEWIG) is framework-2. The complementarity-determining-2 stretch occupies residues 69–85 (NIYPSDSETHYNQKFKD). Residues 86–117 (KATLTVDKSSSTAYMQLSSLTSEDSAVYYCAR) are framework-3.

The chain is Ig heavy chain V region 3 (Ighv1-61) from Mus musculus (Mouse).